The chain runs to 671 residues: Heat shock transcription factor hsf-1 (671 aa).

Composition is skewed to low complexity over residues 1-17 (MQPT…QQQQ) and 38-52 (QQAP…NHQN). The interval 1–61 (MQPTGNQIQQ…NGAIGGKKSS (61 aa)) is disordered. The DNA-binding domain stretch occupies residues 89–196 (LPVFLIKLWN…LLSQIKRKQS (108 aa)). Positions 206–240 (NEQTQQNLEVVMAEMRAMREKAKNMEDKMNKLTKE) form a coiled coil. Disordered stretches follow at residues 329 to 423 (QEPF…PLTH), 437 to 493 (YQGA…VNNY), 526 to 552 (HHPT…GLSP), and 612 to 671 (NAPE…PNLV). Polar residues predominate over residues 370–386 (GAQSSRYSDGGATSSRE). Over residues 439–456 (GASPASGGPSTSSSAPSG) the composition is skewed to low complexity. Composition is skewed to polar residues over residues 474–493 (ATRQ…VNNY) and 528–552 (PTTS…GLSP).

The protein belongs to the HSF family. As to quaternary structure, forms homodimers and homotrimers. Component of the DHIC (ddl-1-containing hsf-1 inhibitory complex), which contains at least ddl-1, ddl-2, hsb-1 and hsf-1. Within the complex, interacts with ddl-1. Formation of the DHIC may be dependent upon the Insulin/IGF-1-like signaling (IIS) mediated pathway. In terms of processing, phosphorylated. Post-translationally, sumoylated. Sumoylation may inhibit transcriptional activity in response to heat shock. As to expression, expressed in intestinal cells, body wall muscle cells, and hypodermal cells, as well as many neurons in the head and tail.

The protein resides in the nucleus. Its subcellular location is the cytoplasm. In terms of biological role, functions as a stress-inducible and DNA-binding transcription factor, playing a central role in the transcriptional activation of the heat shock response (HSR), leading to the expression of a large class of molecular chaperones, heat shock proteins (HSPs), that protect cells from cellular insult damage. Upon exposure to heat and other stress stimuli, activates gene transcription through binding to site-specific heat shock elements (HSEs) present in the promoter regions of target genes, such as the HSPs. Binds to inverted 5'-NGAAN-3' pentamer DNA sequences in HSEs. Involved in positive modulation of expression of heat shock protein hsp-16.2 in response to heat shock; may act in concert with homeodomain-interacting protein kinase hpk-1. In response to heat shock or starvation, required for the modulation of lifespan, and protection against aberrant protein aggregation proteotoxicity; may act in parallel with the Insulin/IGF-1-like signaling (IIS) mediated pathway. Plays a role in modulating autophagy, in response to a moderate and short-term heat shock, also known as a hormetic heat shock. Involved in positive modulation of ascaroside pheromone biosynthesis in response to heat shock, perhaps by directly activating transcription of peroxisomal fatty acid beta-oxidation genes. Required in modulating the response to infection by either Gram-negative or Gram-positive bacteria, perhaps acting via regulation of expression of Hsp90/daf-21 and members of the small heat shock protein (HSP20) family. May play a role downstream of the daf-16/FOXO and daf-2 signaling pathway in response to bacterial pathogens. Modulates expression of multiple microRNA genes, in both heat shock-dependent and -independent manner. Independent of heat shock, required to modulate expression of genes involved in larval development, mainly distinct from HSPs; acts in concert with putative transcription factor efl-1/E2F, which may form part of a multiprotein DRM complex. Independent of heat shock, involved in promoting death of the linker cell, a male-specific cell which guides the elongation of the gonad; perhaps acting by modulating expression of ubiquitin-conjugating enzyme let-70. Plays a role in egg-laying. The polypeptide is Heat shock transcription factor hsf-1 (Caenorhabditis elegans).